We begin with the raw amino-acid sequence, 160 residues long: Eosinophil cationic protein (160 aa).

The first 27 residues, 1-27 (MVPKLFTPQICLLLLLGLMGVEGSLHA), serve as a signal peptide directing secretion. The segment at 28–72 (RPPQFTKAQWFAIQHINVNPPRCTIAMRVINNYQRRCKNQNTFLR) is required for nearly all of the bactericidal activities; partially involved in LPS-binding. The Proton acceptor role is filled by His-42. 4 disulfides stabilise this stretch: Cys-50-Cys-110, Cys-64-Cys-123, Cys-82-Cys-138, and Cys-89-Cys-98. Position 60 is a 3'-nitrotyrosine (Tyr-60). 65–69 (KNQNT) provides a ligand contact to substrate. Residues Asn-84, Asn-92, and Asn-119 are each glycosylated (N-linked (GlcNAc...) asparagine). His-155 serves as the catalytic Proton donor.

The protein belongs to the pancreatic ribonuclease family. Interacts with bacterial lipopolysaccharide (LPS) and lipoteichoic acid (LTA). In vitro interacts with phospholipid bilayers.

Its subcellular location is the secreted. Cytotoxin and helminthotoxin with low-efficiency ribonuclease activity. Possesses a wide variety of biological activities. Exhibits antibacterial activity. The sequence is that of Eosinophil cationic protein (RNASE3) from Macaca nemestrina (Pig-tailed macaque).